The following is a 463-amino-acid chain: MESSSNSDQNEGTPTSSVSSPYRRTYSDISGLSHRFDVQSFYNRPSNTNAVVLSGHEEDVSEDAEEPKDDVVNDVHGDGDEEDSDIDSAEDAELEMMRERFAKLLLGEDMSGSGKGVCTAVTVSNSITNLYATVFGQSLRLQPLSTEKKDLWKREMNCFMSICDYIVEVIPRSLGTNVEITETKLRSDILMSLPALRKLDNMLMEILDSFTENEFWYVERGSSSMNSGGGGRDSGTFRKVVVQRKDEKWWLPVPCVPAEGLSEEERKHLRHKRDCASQIHKAALAINDSTLNDMDIPDSYLTTLPKSGKASVGDVIYKQLCTAEKFYPDQLLDILKITSEHEALELADKVEASLVTWRRKTGGLTHSKSSWDMMKDISGDADRGNDKNHILAARARSLLFCLKQRYPELSQTSLDICKIQFNRDVGKAVLESYSRVLEGLAYNVVSWIDDVLYVDRTVRNRDD.

2 disordered regions span residues Met-1–Thr-25 and Gly-55–Asp-87. Residues Asp-59–Lys-68 are compositionally biased toward acidic residues. Positions Asp-69 to Asp-78 are enriched in basic and acidic residues. The PRONE domain occupies Ser-84–Asp-463.

Interacts with ARAC10/ROP11. Expressed in root vascular tissue and trichoblast cell files. Expressed in root metaxylem cell files. Expressed in guard cells of cotyledons, rosette leaves, sepals, petal, stigmas and siliques. Expressed in root metaxylem cell files.

Its subcellular location is the cytoplasm. It localises to the cell membrane. Its function is as follows. Guanine-nucleotide exchange factor (GEF) that acts as an activator of Rop (Rho of plants) GTPases by promoting the exchange of GDP for GTP. In association with ROPGEF1, acts as a specific regulator of ARAC10/ROP11 function in ABA-mediated stomatal closure. The protein is Rop guanine nucleotide exchange factor 4 (ROPGEF4) of Arabidopsis thaliana (Mouse-ear cress).